Here is a 238-residue protein sequence, read N- to C-terminus: Ribonuclease PH (238 aa).

Residues Arg-86 and 124–126 (GTR) contribute to the phosphate site.

This sequence belongs to the RNase PH family. In terms of assembly, homohexameric ring arranged as a trimer of dimers.

The catalysed reaction is tRNA(n+1) + phosphate = tRNA(n) + a ribonucleoside 5'-diphosphate. Phosphorolytic 3'-5' exoribonuclease that plays an important role in tRNA 3'-end maturation. Removes nucleotide residues following the 3'-CCA terminus of tRNAs; can also add nucleotides to the ends of RNA molecules by using nucleoside diphosphates as substrates, but this may not be physiologically important. Probably plays a role in initiation of 16S rRNA degradation (leading to ribosome degradation) during starvation. In Marinobacter nauticus (strain ATCC 700491 / DSM 11845 / VT8) (Marinobacter aquaeolei), this protein is Ribonuclease PH.